Here is a 486-residue protein sequence, read N- to C-terminus: Malonate-semialdehyde dehydrogenase 2 (486 aa).

NAD(+) is bound by residues Phe-154, Lys-178, Glu-181, Arg-182, and Ser-231. Cys-286 acts as the Nucleophile in catalysis. Glu-386 serves as a coordination point for NAD(+).

The protein belongs to the aldehyde dehydrogenase family. IolA subfamily. In terms of assembly, homotetramer.

The catalysed reaction is 3-oxopropanoate + NAD(+) + CoA + H2O = hydrogencarbonate + acetyl-CoA + NADH + H(+). It catalyses the reaction 2-methyl-3-oxopropanoate + NAD(+) + CoA + H2O = propanoyl-CoA + hydrogencarbonate + NADH + H(+). It functions in the pathway polyol metabolism; myo-inositol degradation into acetyl-CoA; acetyl-CoA from myo-inositol: step 7/7. In terms of biological role, catalyzes the oxidation of malonate semialdehyde (MSA) and methylmalonate semialdehyde (MMSA) into acetyl-CoA and propanoyl-CoA, respectively. Is involved in a myo-inositol catabolic pathway. Bicarbonate, and not CO2, is the end-product of the enzymatic reaction. This chain is Malonate-semialdehyde dehydrogenase 2, found in Oceanobacillus iheyensis (strain DSM 14371 / CIP 107618 / JCM 11309 / KCTC 3954 / HTE831).